The primary structure comprises 256 residues: Astacin-like metalloprotease toxin 2 (256 aa).

Positions 1 to 24 are cleaved as a signal peptide; the sequence is MIPDVGFLVLLTGALFICIKAAPA. Positions 25 to 52 are excised as a propeptide; the sequence is TTDVDPTFEGRIVMEGDILIREEQLTER. The region spanning 53–250 is the Peptidase M12A domain; sequence NAIALENMRW…KKINTLYNCP (198 aa). Disulfide bonds link Cys-94/Cys-249 and Cys-117/Cys-136. His-144 provides a ligand contact to Zn(2+). Residue Glu-145 is part of the active site. The Zn(2+) site is built by His-148 and His-154.

Monomer. Zn(2+) is required as a cofactor. Expressed by the venom gland.

Its subcellular location is the secreted. Its activity is regulated as follows. Inhibited by 1,10-phenanthroline. Zinc metalloprotease. Provoques deadhesion of endothelial cells from cell cultures, and also degradation of fibronectin, fibrinogen and gelatin in vitro. Its role in the venom is not fully understood but it might act as a spreading factor that facilitates diffusion of other venom toxins. Alternatively, it might be involved in the proteolytic processing of other venom toxins or it might play a role in extra-oral digestion of prey. This chain is Astacin-like metalloprotease toxin 2, found in Loxosceles intermedia (Brown spider).